Consider the following 188-residue polypeptide: Phosphatidylinositol N-acetylglucosaminyltransferase subunit H (188 aa).

The protein belongs to the PIGH family. In terms of assembly, component of the glycosylphosphatidylinositol-N-acetylglucosaminyltransferase (GPI-GnT) complex composed at least by PIGA, PIGC, PIGH, PIGP, PIGQ, PIGY and DPM2. Interacts with PIGQ.

The protein localises to the cytoplasm. It participates in glycolipid biosynthesis; glycosylphosphatidylinositol-anchor biosynthesis. Functionally, part of the glycosylphosphatidylinositol-N-acetylglucosaminyltransferase (GPI-GnT) complex that catalyzes the transfer of N-acetylglucosamine from UDP-N-acetylglucosamine to phosphatidylinositol and participates in the first step of GPI biosynthesis. This is Phosphatidylinositol N-acetylglucosaminyltransferase subunit H from Homo sapiens (Human).